We begin with the raw amino-acid sequence, 355 residues long: UDP-N-acetylglucosamine--N-acetylmuramyl-(pentapeptide) pyrophosphoryl-undecaprenol N-acetylglucosamine transferase (355 aa).

UDP-N-acetyl-alpha-D-glucosamine is bound by residues 11–13 (TGG), asparagine 123, arginine 162, serine 185, isoleucine 239, 258–263 (ALTVSE), and glutamine 284.

Belongs to the glycosyltransferase 28 family. MurG subfamily.

The protein resides in the cell inner membrane. It carries out the reaction di-trans,octa-cis-undecaprenyl diphospho-N-acetyl-alpha-D-muramoyl-L-alanyl-D-glutamyl-meso-2,6-diaminopimeloyl-D-alanyl-D-alanine + UDP-N-acetyl-alpha-D-glucosamine = di-trans,octa-cis-undecaprenyl diphospho-[N-acetyl-alpha-D-glucosaminyl-(1-&gt;4)]-N-acetyl-alpha-D-muramoyl-L-alanyl-D-glutamyl-meso-2,6-diaminopimeloyl-D-alanyl-D-alanine + UDP + H(+). The protein operates within cell wall biogenesis; peptidoglycan biosynthesis. Cell wall formation. Catalyzes the transfer of a GlcNAc subunit on undecaprenyl-pyrophosphoryl-MurNAc-pentapeptide (lipid intermediate I) to form undecaprenyl-pyrophosphoryl-MurNAc-(pentapeptide)GlcNAc (lipid intermediate II). The chain is UDP-N-acetylglucosamine--N-acetylmuramyl-(pentapeptide) pyrophosphoryl-undecaprenol N-acetylglucosamine transferase from Hydrogenovibrio crunogenus (strain DSM 25203 / XCL-2) (Thiomicrospira crunogena).